A 177-amino-acid polypeptide reads, in one-letter code: Olfactory protein (177 aa).

An N-terminal signal peptide occupies residues 1 to 17; sequence MIRIIAIVVLFFLQCQA. C81 and C174 form a disulfide bridge.

It belongs to the calycin superfamily. Lipocalin family. In terms of tissue distribution, synthesized in Bowman glands, which secrete the mucus that bathes the cilia of the olfactory neuroepithelium.

It is found in the secreted. The chain is Olfactory protein from Lithobates pipiens (Northern leopard frog).